Consider the following 190-residue polypeptide: Movement protein (190 aa).

This sequence belongs to the tombusvirus/aureusvirus movement protein p22 family.

It localises to the host membrane. Its function is as follows. Transports viral genome to neighboring plant cells directly through plasmosdesmata, without any budding. The movement protein allows efficient cell to cell propagation, by bypassing the host cell wall barrier. The polypeptide is Movement protein (Cucumber necrosis virus (CNV)).